A 318-amino-acid chain; its full sequence is 26 kDa endochitinase 1 (318 aa).

Positions M1 to A19 are cleaved as a signal peptide. The 40-residue stretch at E20–G59 folds into the Chitin-binding type-1 domain. Disulfide bonds link C22/C37, C31/C43, C36/C49, C53/C57, C98/C160, C172/C180, and C279/C311. Catalysis depends on E142, which acts as the Proton donor.

This sequence belongs to the glycosyl hydrolase 19 family. Chitinase class I subfamily.

It catalyses the reaction Random endo-hydrolysis of N-acetyl-beta-D-glucosaminide (1-&gt;4)-beta-linkages in chitin and chitodextrins.. Its function is as follows. Defense against chitin-containing fungal pathogens. In Hordeum vulgare (Barley), this protein is 26 kDa endochitinase 1.